Here is a 486-residue protein sequence, read N- to C-terminus: Transcription factor VOZ1 (486 aa).

The interval 208–405 is VOZ; that stretch reads PPSAFLGPKC…VDGKKTSKGK (198 aa). Positions 217, 222, 236, and 240 each coordinate Zn(2+). The C3H1-type; atypical zinc finger occupies 217-240; the sequence is CALWDCPRPAQGFDWFQDYCSSFH. The interval 424–445 is disordered; sequence EFPPENNTTNTTNNNKRCIKGR. Residues 429-438 are compositionally biased toward low complexity; it reads NNTTNTTNNN.

Homodimer. Interacts with phytochrome B (phyB). As to expression, ubiquitous. Expressed in the vascular bundles of various tissues, specifically in the phloem.

Its subcellular location is the cytoplasm. It is found in the nucleus. Its function is as follows. Transcriptional activator acting positively in the phytochrome B signaling pathway. Functions redundantly with VOZ2 to promote flowering downstream of phytochrome B (phyB). Down-regulates 'FLOWERING LOCUS C' (FLC) and up-regulates 'FLOWERING LOCUS T' (FT). Binds to the 38-bp cis-acting region of the AVP1 gene. Interacts with phyB in the cytoplasm and is translocated to the nucleus at signal transmission, where it is subjected to degradation in a phytochrome-dependent manner. This Arabidopsis thaliana (Mouse-ear cress) protein is Transcription factor VOZ1 (VOZ1).